The sequence spans 634 residues: MSGEIFYSVDNLYDLDSANCHPLVCHLCQEQYEHPCLLDCYHTFCASCLRGRVADSRLTCPVCGHQSVVKGINALPPEDRLLKFLVDSSADSEETVQCANCDLECKKQDVDAMYYCNTCCQPLCRDCRETTHKAKMFSRHEIVSLAKRTKEAHKKCALHEEFYIMFSTEKKSMLCINCFRDMQVESRAHCIDIETAYIQGCEKLDQAVLAVKELQMSAREAIILLKAMIGEVRANVDEEESAICTLFSNMQEKLAERKKILLKAARSQHEEKERTFKEQLSHLAALLPTLQVHLVTCSAFLSSANKFEFLDMGYQLMERLKKIVKLPHRLRPTQSSKINTEYRSEFARCLEPLLLLGQRRSMSTTGSVALALGNASGLMQSSLSVQCHSPAMSDMSLCSSVVRRPTSHRYISTKVLLAKGGETPFMEHCCNYENSYRTLQTEIQKLKDQVQEIHRDLTKHHSLTKPDSMSEILEKSVQVDSQISSEYASVELMRAMFEEIWEETLQRVANEQEIYEAQLHDLLQLKQENSYLTTISRQIGPYIRSIAKVKERLEPRLKEPKELKDDRTEIMLKLYEDSTSTADTQPSNELSCNTEDNWTLNSLSEETNPKNKDYYRTNKQKNTTDSTNRKEIPM.

The RING-type zinc-finger motif lies at 25–63 (CHLCQEQYEHPCLLDCYHTFCASCLRGRVADSRLTCPVC). Residues 93–145 (EETVQCANCDLECKKQDVDAMYYCNTCCQPLCRDCRETTHKAKMFSRHEIVSL) form a B box-type; atypical zinc finger. Zn(2+) contacts are provided by C98, C101, C127, and H132. Residues 575–634 (YEDSTSTADTQPSNELSCNTEDNWTLNSLSEETNPKNKDYYRTNKQKNTTDSTNRKEIPM) form a disordered region. Positions 577–606 (DSTSTADTQPSNELSCNTEDNWTLNSLSEE) are enriched in polar residues. A compositionally biased stretch (basic and acidic residues) spans 607-616 (TNPKNKDYYR).

The protein resides in the cytoplasm. Its function is as follows. Plays a role in cardiac repolarization possibly by stabilizing membrane expression of the potassium channel kcnh6a/zerg, or by assisting its synthesis, folding or export from the endoplasmic reticulum, in a heat shock protein-dependent manner. The chain is RING finger protein 207 (rnf207b) from Danio rerio (Zebrafish).